Consider the following 201-residue polypeptide: Large ribosomal subunit protein uL4 (201 aa).

The segment at 43–69 (TKAQKGRSDVSGGGAKPWKQKGSGRAR) is disordered.

The protein belongs to the universal ribosomal protein uL4 family. As to quaternary structure, part of the 50S ribosomal subunit.

Its function is as follows. One of the primary rRNA binding proteins, this protein initially binds near the 5'-end of the 23S rRNA. It is important during the early stages of 50S assembly. It makes multiple contacts with different domains of the 23S rRNA in the assembled 50S subunit and ribosome. In terms of biological role, forms part of the polypeptide exit tunnel. The sequence is that of Large ribosomal subunit protein uL4 from Thioalkalivibrio sulfidiphilus (strain HL-EbGR7).